A 291-amino-acid chain; its full sequence is N-acetylmannosamine kinase (291 aa).

Residues alanine 5–lysine 12 and glycine 132–serine 139 contribute to the ATP site. Zn(2+)-binding residues include histidine 156, cysteine 166, cysteine 168, and cysteine 173.

The protein belongs to the ROK (NagC/XylR) family. NanK subfamily. Homodimer.

It carries out the reaction an N-acyl-D-mannosamine + ATP = an N-acyl-D-mannosamine 6-phosphate + ADP + H(+). Its pathway is amino-sugar metabolism; N-acetylneuraminate degradation; D-fructose 6-phosphate from N-acetylneuraminate: step 2/5. In terms of biological role, catalyzes the phosphorylation of N-acetylmannosamine (ManNAc) to ManNAc-6-P. The chain is N-acetylmannosamine kinase from Escherichia coli (strain ATCC 8739 / DSM 1576 / NBRC 3972 / NCIMB 8545 / WDCM 00012 / Crooks).